The sequence spans 345 residues: MYEHPFQLKSLNTFSVNAFAKSVVTAHHEHTLLKFWRKAYRKGKPVLILGGGSNILFLENYSGTILLNRIKGIFITENETAWQLHVGAGEKWDELVVHTIKKNIPGLENLACIPGYVGAAPIQNIGAYGVELSQICEYVDAIDLYSGKKIRFTCSECDFKYRDSIFRNCLEKYAIVSVGLRLCKKWKPILDYHELAHLEKFHITPRQIFNFIYIIRHKKLPDPVLVGNAGSFFKNPIIDIKTARCLFQIYPNMPYFYQKDGRIKLSAGWLIEYCQLKGYIFGEAAIYPKQALVLINSKKIATGTEIAALALYIYNKVADQFNIYLQPEVRLIGNYGEINPKKLFM.

The FAD-binding PCMH-type domain maps to 16-185; sequence VNAFAKSVVT…VSVGLRLCKK (170 aa). Arg-162 is an active-site residue. The active-site Proton donor is Ser-231. Glu-328 is a catalytic residue.

This sequence belongs to the MurB family. FAD serves as cofactor.

The protein localises to the cytoplasm. It carries out the reaction UDP-N-acetyl-alpha-D-muramate + NADP(+) = UDP-N-acetyl-3-O-(1-carboxyvinyl)-alpha-D-glucosamine + NADPH + H(+). The protein operates within cell wall biogenesis; peptidoglycan biosynthesis. In terms of biological role, cell wall formation. In Blochmanniella pennsylvanica (strain BPEN), this protein is UDP-N-acetylenolpyruvoylglucosamine reductase.